Reading from the N-terminus, the 346-residue chain is Haptoglobin (346 aa).

The signal sequence occupies residues 1–18 (MRALGAVVTLLLWGQLFA). Positions 31–87 (DSCPKPPEIENGYVEHLVRYRCQHYRLRTEGDGVYTLNSEKQWVNTAAGERLPECEA) constitute a Sushi domain. 4 cysteine pairs are disulfide-bonded: Cys52–Cys85, Cys89–Cys206, Cys249–Cys280, and Cys291–Cys321. A Peptidase S1 domain is found at 102-344 (IIGGSLDAKG…FLDWIQETMA (243 aa)). N-linked (GlcNAc...) asparagine glycosylation is found at Asn147 and Asn181. Residues 258 to 263 (VPEKEG) form an interaction with CD163 region.

It belongs to the peptidase S1 family. Tetramer of two alpha and two beta chains; disulfide-linked. The hemoglobin/haptoglobin complex is composed of a haptoglobin dimer bound to two hemoglobin alpha-beta dimers. Interacts with CD163. Interacts with ERGIC3. In terms of tissue distribution, expressed by the liver and secreted in plasma.

Its subcellular location is the secreted. Its function is as follows. As a result of hemolysis, hemoglobin is found to accumulate in the kidney and is secreted in the urine. Haptoglobin captures, and combines with free plasma hemoglobin to allow hepatic recycling of heme iron and to prevent kidney damage. Haptoglobin also acts as an antioxidant, has antibacterial activity and plays a role in modulating many aspects of the acute phase response. Hemoglobin/haptoglobin complexes are rapidly cleared by the macrophage CD163 scavenger receptor expressed on the surface of liver Kupfer cells through an endocytic lysosomal degradation pathway. The protein is Haptoglobin (HP) of Mesocricetus auratus (Golden hamster).